The primary structure comprises 409 residues: DNA replication and repair protein RecF (409 aa).

ATP is bound at residue 30 to 37; that stretch reads GSNGHGKT.

The protein belongs to the RecF family.

It localises to the cytoplasm. Functionally, the RecF protein is involved in DNA metabolism; it is required for DNA replication and normal SOS inducibility. RecF binds preferentially to single-stranded, linear DNA. It also seems to bind ATP. This Rhodococcus erythropolis (strain PR4 / NBRC 100887) protein is DNA replication and repair protein RecF.